The primary structure comprises 287 residues: MALCNLNPTQGIFPLQGLSKSQEFICFSLLQSPRCGSYSSLKTKRFGFCIRSKFSEKEAGKLDRGYVATVNSKEIKKVGKKEHHLWKKNDSAGSGQKALNLVRMLSGLPNEKEAVYGALNKWVAWEVEFPIIAAAKALQILRKRSQWHRVIQLAKWMLSKGQGATMGTYDILLLAFDMDERADEAESLWNMILHTHTRSIPRRLFARMIALYAHHDLHDKVIEVFADMEELKVSPDEDSARRVARAFRELNQEENRKLILRRYLSEYKYIYFNGERVRVKRYFSEDS.

Residues 1–34 (MALCNLNPTQGIFPLQGLSKSQEFICFSLLQSPR) constitute a chloroplast transit peptide. 2 PPR repeats span residues 165-199 (TMGTYDILLLAFDMDERADEAESLWNMILHTHTRS) and 201-235 (PRRLFARMIALYAHHDLHDKVIEVFADMEELKVSP).

Belongs to the PPR family. P subfamily.

The protein resides in the plastid. Its subcellular location is the chloroplast. The polypeptide is Pentatricopeptide repeat-containing protein At4g18975, chloroplastic (Arabidopsis thaliana (Mouse-ear cress)).